Consider the following 428-residue polypeptide: Glutamate-1-semialdehyde 2,1-aminomutase (428 aa).

The residue at position 266 (Lys266) is an N6-(pyridoxal phosphate)lysine.

It belongs to the class-III pyridoxal-phosphate-dependent aminotransferase family. HemL subfamily. In terms of assembly, homodimer. The cofactor is pyridoxal 5'-phosphate.

The protein resides in the cytoplasm. The catalysed reaction is (S)-4-amino-5-oxopentanoate = 5-aminolevulinate. It functions in the pathway porphyrin-containing compound metabolism; protoporphyrin-IX biosynthesis; 5-aminolevulinate from L-glutamyl-tRNA(Glu): step 2/2. This chain is Glutamate-1-semialdehyde 2,1-aminomutase, found in Herminiimonas arsenicoxydans.